Here is a 58-residue protein sequence, read N- to C-terminus: Small ribosomal subunit protein bS21 (58 aa).

The tract at residues 25-58 (KAGTLQEARKREHYEKPSVKRKRKSEAARKRKKI) is disordered. Over residues 31 to 42 (EARKREHYEKPS) the composition is skewed to basic and acidic residues. Residues 43-58 (VKRKRKSEAARKRKKI) show a composition bias toward basic residues.

It belongs to the bacterial ribosomal protein bS21 family.

This is Small ribosomal subunit protein bS21 from Streptococcus thermophilus (strain ATCC BAA-491 / LMD-9).